A 206-amino-acid polypeptide reads, in one-letter code: Tumor protein D54 (206 aa).

Methionine 1 is modified (N-acetylmethionine). A compositionally biased stretch (polar residues) spans 1–14; it reads MDSAGQDINLNSPN. The interval 1-24 is disordered; the sequence is MDSAGQDINLNSPNKGLLSDSMTD. 4 positions are modified to phosphoserine: serine 3, serine 12, serine 19, and serine 21. Positions 38–82 form a coiled coil; the sequence is VEGLTEAEEEELRAELTKVEEEIVTLRQVLAAKERHCGELKRRLG. A phosphoserine mark is found at serine 96, serine 149, and serine 161. The residue at position 163 (threonine 163) is a Phosphothreonine. The residue at position 166 (serine 166) is a Phosphoserine. Position 173 is a phosphothreonine (threonine 173). The span at 175–185 shows a compositional bias: basic and acidic residues; sequence KSKVVGDRENG. Residues 175–206 are disordered; the sequence is KSKVVGDRENGSDSLPSSAGSGDKPLSDPAPF. 2 positions are modified to phosphoserine: serine 192 and serine 195.

The protein belongs to the TPD52 family. In terms of assembly, forms a homodimer or heterodimer with other members of the family. Interacts with MAL2.

This Pongo abelii (Sumatran orangutan) protein is Tumor protein D54 (TPD52L2).